Consider the following 110-residue polypeptide: MSLSEARFHDLVDATQQALEDLFDESDLDLDMENSAGVLTVKFDNGSQLIFSRQEPLRQLWLADRSGGFHFDYDEESGKWVCEKTEELLGEMLERIVWERAGEKLDFDEI.

The protein belongs to the frataxin family.

In terms of biological role, involved in iron-sulfur (Fe-S) cluster assembly. May act as a regulator of Fe-S biogenesis. The sequence is that of Iron-sulfur cluster assembly protein CyaY from Pseudomonas entomophila (strain L48).